The chain runs to 245 residues: MNAPQDRTDDGGVPVPVTPAGATGGAPAELPPSSPAGRGMFGDQGTGDVSGYGGLVRPQRSIEAASRPYGGYFDEVADALEEAYPAFGEAIEKVVVDRGELTLHIRPERIAEVCQVLRDDLALRFELCSSVSGVDYLGADARRLHAVYQLTSMTYRRQIRLEAAVSVEDPHLPSVTGVYPTADWQEREAYDMFGIVFDGHPGLTRILMPDDWEGHPQRKDYPLGGVPVEYKGAEIPPPDRRRSYQ.

A compositionally biased stretch (basic and acidic residues) spans 1-10 (MNAPQDRTDD). 2 disordered regions span residues 1-54 (MNAP…GYGG) and 217-245 (QRKDYPLGGVPVEYKGAEIPPPDRRRSYQ). Residues 11 to 28 (GGVPVPVTPAGATGGAPA) are compositionally biased toward low complexity. A compositionally biased stretch (gly residues) spans 39-54 (GMFGDQGTGDVSGYGG).

This sequence belongs to the complex I 30 kDa subunit family. NDH-1 is composed of 14 different subunits. Subunits NuoB, C, D, E, F, and G constitute the peripheral sector of the complex.

It is found in the cell membrane. It carries out the reaction a quinone + NADH + 5 H(+)(in) = a quinol + NAD(+) + 4 H(+)(out). In terms of biological role, NDH-1 shuttles electrons from NADH, via FMN and iron-sulfur (Fe-S) centers, to quinones in the respiratory chain. The immediate electron acceptor for the enzyme in this species is believed to be a menaquinone. Couples the redox reaction to proton translocation (for every two electrons transferred, four hydrogen ions are translocated across the cytoplasmic membrane), and thus conserves the redox energy in a proton gradient. This is NADH-quinone oxidoreductase subunit C from Salinispora arenicola (strain CNS-205).